Here is a 2068-residue protein sequence, read N- to C-terminus: MMAQKKKRRKKDIDFLGLYEEELLNYDSEDGEDELEHEYYKAKVYEVVTATGDVRGAGTDANVFITLFGENGLSPKLHLTSKSESAFEKANVDVFRVRTNNVGLIYKIRIEHDNTGLNASWYLDRVIVTDMKRPHLRYYFNCNNWLSKVEGDRQWCRDLLASFDPMDMPRGNKYEIKVYTGDVIGAGTDADVFINIFGEYGDTGERRLENEKDNFEKGAEDKFTLDAPDLGQLMKINVGHNNKGGSAGWFLSKIIIEDIGNKRKYDFPLNRWLALDEDDGKIQRDILVGGAETTAITYIVTVFTGDIRGAGTKSKIYLVMYGARGNKNSGKIFLEGGVFDRGRTDIFHIDLAVLLSPLSRVSIGHGNIGVNRGWYCEKVVILCPFTGIQQTFPCSNWLDEKKADGLIERQLYEMVSLRKKRLKKYPWSLWVWTTDLKKAGTNSPIFIQIYGKKGRTDEILLNPNNKWFKPGIIEKFRMELPDLGRFYKIRAWHDRQNPGSGWHLEKMTLMNTINKDKYNFNCNRWLDANEDDNEIVREMTAEGPTVRRIMGMARYRVTVCTGELEGAGTDANVYLCLFGDVGDTGERLLYNCRNNTDLFEKGNADEFTIESVTMRKVRRVRVRHDGKGSGSGWYLDRVLVREEGQPESDNVEFPCLRWLDKDKDDGQLVRELLPSDSNATLKNFRYHISVKTGDVSGASTDSRVYIKLYGEKSDTIKQVLLVSDNNLKDYFERGRVDEFTLETLNIGTINRLVIGHDSTGMHAGWFLGSVQIRVPRQGKQYTFPANRWLDKNQADGRLEVELYPSEVVEIQKLVHYEIEIWTGDVGGAGTTSRVFVQIYGEEGKTEVLFLSSRSKVFDRGSKDIFQTDTFTIYAIDLGALTKIRIRHDNTGNRPGWFLDRVDITDVNNETTYYFPCQRWLAVEEDDGQLSRELLPVDESYVLPSEDEEGGGQGDNNPLDNLALEQKDKSTTFSVTIKTGDKKNAGTDANVFITLFGTQDNNGMTLLKSSKTNSDKFERDSIEIFTVETLDLGDLWKVRIGHDNTGKAPGWFVDWVEVDAPSLGKCMTFPCGRWLAKNEDDGSIVRDLFHAELQTRLYTPFVPYEITLYTSDVFAAGTDANIFIVIYGCDAVCTRQKFLCTNKREQKLFFERKSASRFIVELEDVGEIIEKIRIGHDNTGINPGWHCSHVDIRRLLPEKDGTETLTFPCDRWLATSEDDKKTIRELVPYDIFTEKYMKDGSLRQVYKEVEEPLDIVLYSVQIFTGNVPGAGTDAKVYITIYGDLGDTGERYLGKSENRTNKFEKGTADTFIIEAADLGVIYKIKLRHDNTKWCADWYVEKVEIWNDTNEDEFLFLCGRWLSLKKEDGRLERLFYEKEYTGDRSSNCSSPADFWEIALSSKMADVDIDTVTGPMVDYVQDGPVIPYYVSVTTGKHKEAATDSRAFVLLIGEDDECTNRIWLDYPQGKRGFSCGSVEEFYVGGLDVGIIKKIELGHDGASPESCWLVEELCLAVPTQGTKYTLRCNCWLAKDRGDGVTSRVFDLLDAMVVNIGKKVLYEMTVWTGDVVGGGTDSNIFMTLYGINGSTEEVQLDKKKARFEREQNDTFIMEILDIAPFTKMRIRIDGMGSRPEWFLERILLKNMNTGDLTMFYYGDWLSQKKGKKTLVCEICAVIDGEEMMEWTSYTVSVKTSDILGAGTDANVFIIIFGENGDSGTLALKQSANWNKFERNNTDTFNFSDMLSLGHLCKLRVWHDNKGIFPGWHLSYVDVKDNSRDETFRFQCDCWLSKSEGDRQTLRDFACANNEIRDELEETTYEIVIETGNGGETRENVWLILEGRKNRSKEFLVENSSRQRAFRKGTTDTFEFDSIFLGDIASLCVGHLAREDRFIPKRELVWHVKTITITEMEYGNVYFFNCDCLIPLKRKRKYFKVFEVTKTTESFASKIQSLVPVKYEVIVTTGYEPGAGTDANVFVTIFGANGDTGKRELKQKMRNLFERGSTDRFFLETLELGELRKVRLEHDSSGYYSGWLVEKVEVTNTSTGVATIFSCGRWLDKSRGDGLTWRELFPSV.

PLAT domains follow at residues 43–160 (KVYE…RDLL), 172–287 (NKYE…RDIL), 296–412 (ITYI…RQLY), 425–540 (YPWS…REMT), 553–673 (ARYR…RELL), 684–803 (FRYH…VELY), 814–934 (VHYE…RELL), 970–1088 (TTFS…RDLF), 1101–1226 (VPYE…RELV), 1255–1373 (VLYS…RLFY), 1422–1540 (IPYY…RVFD), 1553–1668 (VLYE…CEIC), 1680–1798 (TSYT…RDFA), 1811–1932 (TTYE…VFEV), and 1949–2065 (VKYE…RELF).

In terms of tissue distribution, expressed in the inner ear, specifically in hair cells. Higher expression is detected in the cochlea.

It localises to the cell projection. It is found in the stereocilium. Functionally, required for normal function of hair cells in the inner ear. The protein is Lipoxygenase homology domain-containing protein 1 (Loxhd1) of Mus musculus (Mouse).